The chain runs to 364 residues: Mannonate dehydratase (364 aa).

The protein belongs to the mannonate dehydratase family. It depends on Fe(2+) as a cofactor. Mn(2+) is required as a cofactor.

The catalysed reaction is D-mannonate = 2-dehydro-3-deoxy-D-gluconate + H2O. Its pathway is carbohydrate metabolism; pentose and glucuronate interconversion. Catalyzes the dehydration of D-mannonate. The protein is Mannonate dehydratase of Endomicrobium trichonymphae.